Reading from the N-terminus, the 37-residue chain is Large ribosomal subunit protein bL36 (37 aa).

It belongs to the bacterial ribosomal protein bL36 family.

This Treponema pallidum (strain Nichols) protein is Large ribosomal subunit protein bL36.